A 173-amino-acid polypeptide reads, in one-letter code: Adenine phosphoribosyltransferase (173 aa).

The protein belongs to the purine/pyrimidine phosphoribosyltransferase family. Homodimer.

Its subcellular location is the cytoplasm. It catalyses the reaction AMP + diphosphate = 5-phospho-alpha-D-ribose 1-diphosphate + adenine. The protein operates within purine metabolism; AMP biosynthesis via salvage pathway; AMP from adenine: step 1/1. In terms of biological role, catalyzes a salvage reaction resulting in the formation of AMP, that is energically less costly than de novo synthesis. In Desulfosudis oleivorans (strain DSM 6200 / JCM 39069 / Hxd3) (Desulfococcus oleovorans), this protein is Adenine phosphoribosyltransferase.